The chain runs to 152 residues: MIALIQRVTRADVRVGGRTTGEIGAGLLALVCAERGDTEAAADKLLAKLLGYRVFSDAAGKMNLPVSNIDGEGRAGGLLLVSQFTLAADTNSGLRPSFTPAAPPDEGARLFDYFVAAARARHPIVETGEFGADMQVSLVNDGPVTFWLQVRP.

The short motif at 142 to 143 (GP) is the Gly-cisPro motif, important for rejection of L-amino acids element.

Belongs to the DTD family. As to quaternary structure, homodimer.

The protein resides in the cytoplasm. It carries out the reaction glycyl-tRNA(Ala) + H2O = tRNA(Ala) + glycine + H(+). The enzyme catalyses a D-aminoacyl-tRNA + H2O = a tRNA + a D-alpha-amino acid + H(+). An aminoacyl-tRNA editing enzyme that deacylates mischarged D-aminoacyl-tRNAs. Also deacylates mischarged glycyl-tRNA(Ala), protecting cells against glycine mischarging by AlaRS. Acts via tRNA-based rather than protein-based catalysis; rejects L-amino acids rather than detecting D-amino acids in the active site. By recycling D-aminoacyl-tRNA to D-amino acids and free tRNA molecules, this enzyme counteracts the toxicity associated with the formation of D-aminoacyl-tRNA entities in vivo and helps enforce protein L-homochirality. The polypeptide is D-aminoacyl-tRNA deacylase (Burkholderia cenocepacia (strain HI2424)).